A 138-amino-acid chain; its full sequence is Large-conductance mechanosensitive channel (138 aa).

3 helical membrane-spanning segments follow: residues 19-39 (VGVI…GDVI), 40-60 (MPVI…IGLS), and 81-101 (GSFL…FIVI).

The protein belongs to the MscL family. In terms of assembly, homopentamer.

The protein localises to the cell inner membrane. Channel that opens in response to stretch forces in the membrane lipid bilayer. May participate in the regulation of osmotic pressure changes within the cell. This is Large-conductance mechanosensitive channel from Afipia carboxidovorans (strain ATCC 49405 / DSM 1227 / KCTC 32145 / OM5) (Oligotropha carboxidovorans).